Reading from the N-terminus, the 110-residue chain is Large ribosomal subunit protein uL22 (110 aa).

It belongs to the universal ribosomal protein uL22 family. In terms of assembly, part of the 50S ribosomal subunit.

Its function is as follows. This protein binds specifically to 23S rRNA; its binding is stimulated by other ribosomal proteins, e.g. L4, L17, and L20. It is important during the early stages of 50S assembly. It makes multiple contacts with different domains of the 23S rRNA in the assembled 50S subunit and ribosome. Functionally, the globular domain of the protein is located near the polypeptide exit tunnel on the outside of the subunit, while an extended beta-hairpin is found that lines the wall of the exit tunnel in the center of the 70S ribosome. The chain is Large ribosomal subunit protein uL22 from Saccharophagus degradans (strain 2-40 / ATCC 43961 / DSM 17024).